Consider the following 448-residue polypeptide: UDP-N-acetylmuramoylalanine--D-glutamate ligase (448 aa).

Residue 116–122 (GSNAKST) participates in ATP binding.

Belongs to the MurCDEF family.

It localises to the cytoplasm. The enzyme catalyses UDP-N-acetyl-alpha-D-muramoyl-L-alanine + D-glutamate + ATP = UDP-N-acetyl-alpha-D-muramoyl-L-alanyl-D-glutamate + ADP + phosphate + H(+). Its pathway is cell wall biogenesis; peptidoglycan biosynthesis. Cell wall formation. Catalyzes the addition of glutamate to the nucleotide precursor UDP-N-acetylmuramoyl-L-alanine (UMA). The sequence is that of UDP-N-acetylmuramoylalanine--D-glutamate ligase from Pseudomonas fluorescens (strain Pf0-1).